The sequence spans 363 residues: Holliday junction branch migration complex subunit RuvB (363 aa).

A disordered region spans residues 1-44 (MAIKRNQGHGLPPKRDPALGRDALTTSQALPEDQEQSANEDRIR). The segment at 13-204 (PKRDPALGRD…FGLIQRLRFY (192 aa)) is large ATPase domain (RuvB-L). ATP-binding residues include isoleucine 43, arginine 44, glycine 85, lysine 88, threonine 89, threonine 90, arginine 194, tyrosine 204, and arginine 241. Threonine 89 provides a ligand contact to Mg(2+). The interval 205–275 (EVDELIAIVH…VAATALDLYN (71 aa)) is small ATPAse domain (RuvB-S). Residues 278–363 (ALGLDWTDRL…EQSTQLDFLP (86 aa)) form a head domain (RuvB-H) region. 2 residues coordinate DNA: arginine 333 and arginine 338.

The protein belongs to the RuvB family. Homohexamer. Forms an RuvA(8)-RuvB(12)-Holliday junction (HJ) complex. HJ DNA is sandwiched between 2 RuvA tetramers; dsDNA enters through RuvA and exits via RuvB. An RuvB hexamer assembles on each DNA strand where it exits the tetramer. Each RuvB hexamer is contacted by two RuvA subunits (via domain III) on 2 adjacent RuvB subunits; this complex drives branch migration. In the full resolvosome a probable DNA-RuvA(4)-RuvB(12)-RuvC(2) complex forms which resolves the HJ.

Its subcellular location is the cytoplasm. The catalysed reaction is ATP + H2O = ADP + phosphate + H(+). Functionally, the RuvA-RuvB-RuvC complex processes Holliday junction (HJ) DNA during genetic recombination and DNA repair, while the RuvA-RuvB complex plays an important role in the rescue of blocked DNA replication forks via replication fork reversal (RFR). RuvA specifically binds to HJ cruciform DNA, conferring on it an open structure. The RuvB hexamer acts as an ATP-dependent pump, pulling dsDNA into and through the RuvAB complex. RuvB forms 2 homohexamers on either side of HJ DNA bound by 1 or 2 RuvA tetramers; 4 subunits per hexamer contact DNA at a time. Coordinated motions by a converter formed by DNA-disengaged RuvB subunits stimulates ATP hydrolysis and nucleotide exchange. Immobilization of the converter enables RuvB to convert the ATP-contained energy into a lever motion, pulling 2 nucleotides of DNA out of the RuvA tetramer per ATP hydrolyzed, thus driving DNA branch migration. The RuvB motors rotate together with the DNA substrate, which together with the progressing nucleotide cycle form the mechanistic basis for DNA recombination by continuous HJ branch migration. Branch migration allows RuvC to scan DNA until it finds its consensus sequence, where it cleaves and resolves cruciform DNA. The polypeptide is Holliday junction branch migration complex subunit RuvB (Picosynechococcus sp. (strain ATCC 27264 / PCC 7002 / PR-6) (Agmenellum quadruplicatum)).